We begin with the raw amino-acid sequence, 351 residues long: DNA polymerase IV (351 aa).

The UmuC domain occupies 4–185 (IIHVDMDCFF…LPLEKIPGVG (182 aa)). The Mg(2+) site is built by aspartate 8 and aspartate 103. Glutamate 104 is an active-site residue.

Belongs to the DNA polymerase type-Y family. In terms of assembly, monomer. Mg(2+) serves as cofactor.

Its subcellular location is the cytoplasm. The catalysed reaction is DNA(n) + a 2'-deoxyribonucleoside 5'-triphosphate = DNA(n+1) + diphosphate. In terms of biological role, poorly processive, error-prone DNA polymerase involved in untargeted mutagenesis. Copies undamaged DNA at stalled replication forks, which arise in vivo from mismatched or misaligned primer ends. These misaligned primers can be extended by PolIV. Exhibits no 3'-5' exonuclease (proofreading) activity. May be involved in translesional synthesis, in conjunction with the beta clamp from PolIII. The sequence is that of DNA polymerase IV from Shigella flexneri.